Reading from the N-terminus, the 127-residue chain is Putative pre-16S rRNA nuclease (127 aa).

This sequence belongs to the YqgF nuclease family.

It localises to the cytoplasm. Functionally, could be a nuclease involved in processing of the 5'-end of pre-16S rRNA. The sequence is that of Putative pre-16S rRNA nuclease from Campylobacter jejuni subsp. jejuni serotype O:23/36 (strain 81-176).